We begin with the raw amino-acid sequence, 584 residues long: DNA damage-binding protein 2 (584 aa).

Residues Met-1–Arg-87 are disordered. The span at Arg-8–Gly-20 shows a compositional bias: basic residues. Composition is skewed to acidic residues over residues Pro-25–Gln-35 and Asp-45–Ala-66. A CCHC-type zinc finger spans residues Lys-122–His-140. WD repeat units follow at residues Phe-192–Thr-232, Val-236–Asn-278, Ser-288–Asp-327, Lys-333–Ala-373, Ala-378–Pro-418, Glu-438–Val-481, and Pro-484–Glu-523. The DWD box motif lies at Leu-351–Arg-366. Basic and acidic residues predominate over residues Thr-517 to Glu-532. The segment at Thr-517–Val-584 is disordered. The span at Lys-562–Val-584 shows a compositional bias: basic residues.

The protein belongs to the WD repeat DDB2/WDR76 family. Component of the UV-DDB complex, which is composed of DDB1 and DDB2. In terms of tissue distribution, expressed in proliferating tissues such as shoot apical meristem (SAM), root tips and young leaves. Not detected in mature leaves.

The protein localises to the nucleus. Its function is as follows. Required for DNA repair. Binds to DDB1 to form the UV-damaged DNA-binding protein complex (the UV-DDB complex). The UV-DDB complex may recognize UV-induced DNA damage and recruit proteins of the nucleotide excision repair pathway (the NER pathway) to initiate DNA repair. May function as the substrate recognition module for a DCX (DDB1-CUL4-X-box) E3 ubiquitin-protein ligase complex. This chain is DNA damage-binding protein 2, found in Oryza sativa subsp. japonica (Rice).